Consider the following 330-residue polypeptide: Ferredoxin--NADP reductase (330 aa).

Residues glutamate 35, glutamine 43, tyrosine 48, valine 90, phenylalanine 123, aspartate 285, and threonine 326 each contribute to the FAD site.

This sequence belongs to the ferredoxin--NADP reductase type 2 family. Homodimer. FAD serves as cofactor.

The catalysed reaction is 2 reduced [2Fe-2S]-[ferredoxin] + NADP(+) + H(+) = 2 oxidized [2Fe-2S]-[ferredoxin] + NADPH. This Streptococcus pyogenes serotype M2 (strain MGAS10270) protein is Ferredoxin--NADP reductase.